The following is a 115-amino-acid chain: MKFVLLFGVFLVTLFSYSSAEMLDDFDQADEDELLSLIEKEEARAKECTPRFYDCSHDRHSCCRSELFKDVCTCFYPEGGDNEVCTCQQPKHLKYMEKAADKAKKFGGKIKRWFG.

Positions 1–20 (MKFVLLFGVFLVTLFSYSSA) are cleaved as a signal peptide. Positions 21–44 (EMLDDFDQADEDELLSLIEKEEAR) are excised as a propeptide. Disulfide bonds link C48/C63, C55/C72, C62/C87, and C74/C85.

The protein belongs to the neurotoxin 19 (CSTX) family. 01 subfamily. Expressed by the venom gland.

The protein localises to the secreted. In Lycosa singoriensis (Wolf spider), this protein is U3-lycotoxin-Ls1h.